A 1013-amino-acid chain; its full sequence is Sodium/potassium-transporting ATPase subunit alpha-3 (1013 aa).

Positions 1 to 24 are disordered; that stretch reads MGDKKDDKDSPKKNKGKERRDLDD. Topologically, residues 1 to 77 are cytoplasmic; it reads MGDKKDDKDS…NALTPPPTTP (77 aa). A phosphoserine mark is found at serine 37 and serine 56. The tract at residues 72–74 is interaction with phosphoinositide-3 kinase; the sequence is PPP. The helical transmembrane segment at 78–98 threads the bilayer; the sequence is EWVKFCRQLFGGFSILLWIGA. Topologically, residues 99 to 121 are extracellular; that stretch reads ILCFLAYGIQAGTEDDPSGDNLY. The chain crosses the membrane as a helical span at residues 122–142; the sequence is LGIVLAAVVIITGCFSYYQEA. Over 143–278 the chain is Cytoplasmic; the sequence is KSSKIMESFK…VGKTPIAIEI (136 aa). Serine 218 and serine 265 each carry phosphoserine. Residues 279-298 form a helical membrane-spanning segment; the sequence is EHFIQLITGVAVFLGVSFFI. Topologically, residues 299 to 310 are extracellular; it reads LSLILGYTWLEA. Residues 311–328 traverse the membrane as a helical segment; it reads VIFLIGIIVANVPEGLLA. Over 329 to 762 the chain is Cytoplasmic; the sequence is TVTVCLTLTA…EEGRLIFDNL (434 aa). Catalysis depends on aspartate 366, which acts as the 4-aspartylphosphate intermediate. Position 442 is a phosphoserine (serine 442). Residue tyrosine 548 is modified to Phosphotyrosine. Mg(2+)-binding residues include aspartate 707 and aspartate 711. The helical transmembrane segment at 763-782 threads the bilayer; it reads KKSIAYTLTSNIPEITPFLL. Topologically, residues 783–792 are extracellular; that stretch reads FIMANIPLPL. Residues 793-813 form a helical membrane-spanning segment; the sequence is GTITILCIDLGTDMVPAISLA. Over 814–833 the chain is Cytoplasmic; it reads YEAAESDIMKRQPRNPRTDK. The helical transmembrane segment at 834–856 threads the bilayer; it reads LVNERLISMAYGQIGMIQALGGF. Residues 857-908 lie on the Extracellular side of the membrane; it reads FSYFVILAENGFLPGNLVGIRLNWDDRTVNDLEDSYGQQWTYEQRKVVEFTC. Residues 909–928 traverse the membrane as a helical segment; the sequence is HTAFFVSIVVVQWADLIICK. Topologically, residues 929–941 are cytoplasmic; that stretch reads TRRNSVFQQGMKN. A Phosphoserine; by PKA modification is found at serine 933. Residues 942–960 form a helical membrane-spanning segment; that stretch reads KILIFGLFEETALAAFLSY. Topologically, residues 961 to 975 are extracellular; it reads CPGMDVALRMYPLKP. Residues 976 to 996 form a helical membrane-spanning segment; the sequence is SWWFCAFPYSFLIFVYDEIRK. Topologically, residues 997-1013 are cytoplasmic; it reads LILRRNPGGWVEKETYY.

This sequence belongs to the cation transport ATPase (P-type) (TC 3.A.3) family. Type IIC subfamily. As to quaternary structure, the sodium/potassium-transporting ATPase is composed of a catalytic alpha subunit, an auxiliary non-catalytic beta subunit and an additional regulatory subunit. Interacts with regulatory subunit FXYD1.

It is found in the cell membrane. It carries out the reaction K(+)(out) + Na(+)(in) + ATP + H2O = K(+)(in) + Na(+)(out) + ADP + phosphate + H(+). Functionally, this is the catalytic component of the active enzyme, which catalyzes the hydrolysis of ATP coupled with the exchange of sodium and potassium ions across the plasma membrane. This action creates the electrochemical gradient of sodium and potassium ions, providing the energy for active transport of various nutrients. The sequence is that of Sodium/potassium-transporting ATPase subunit alpha-3 (ATP1A3) from Homo sapiens (Human).